Here is a 1322-residue protein sequence, read N- to C-terminus: Serine/threonine-protein kinase TIO (1322 aa).

The Protein kinase domain maps to Tyr-6–Val-256. ATP-binding positions include Val-12–Val-20 and Lys-35. Residue Asp-127 is the Proton acceptor of the active site. The tract at residues Cys-1000–Ser-1322 is required for the binding to Kinesin-12 members. ARM repeat units lie at residues Pro-1056–Arg-1098, Lys-1101–Arg-1140, Gly-1143–Tyr-1182, His-1183–Arg-1223, Asn-1226–Leu-1273, and Gln-1281–Gly-1320.

This sequence belongs to the protein kinase superfamily. Ser/Thr protein kinase family. As to quaternary structure, interacts with Kinesin-12 members KIN12A/PAKRP1 and KIN12B/PAKRP1L. Interacts with KIN7B/NACK2. In terms of tissue distribution, ubiquitous.

The protein localises to the cytoplasm. It localises to the cytoskeleton. The protein resides in the phragmoplast. It carries out the reaction L-seryl-[protein] + ATP = O-phospho-L-seryl-[protein] + ADP + H(+). The enzyme catalyses L-threonyl-[protein] + ATP = O-phospho-L-threonyl-[protein] + ADP + H(+). Plays a role in conventional modes of cytokinesis in meristems and during male gametogenesis but also acts in nonconventional modes of cytokinesis (cellularization) during female gametogenesis. Constitutes a signaling module in association with Kinesin-12 members that is required to support phragmoplast expansion and cell-plate growth in plant cells. The protein is Serine/threonine-protein kinase TIO (TIO) of Arabidopsis thaliana (Mouse-ear cress).